Consider the following 902-residue polypeptide: Protein translocase subunit SecA (902 aa).

ATP contacts are provided by residues Gln-89, 107 to 111, and Asp-502; that span reads GEGKT. Zn(2+)-binding residues include Cys-884, Cys-886, Cys-895, and His-896.

Belongs to the SecA family. Monomer and homodimer. Part of the essential Sec protein translocation apparatus which comprises SecA, SecYEG and auxiliary proteins SecDF-YajC and YidC. Requires Zn(2+) as cofactor.

The protein resides in the cell inner membrane. It is found in the cytoplasm. The enzyme catalyses ATP + H2O + cellular proteinSide 1 = ADP + phosphate + cellular proteinSide 2.. Functionally, part of the Sec protein translocase complex. Interacts with the SecYEG preprotein conducting channel. Has a central role in coupling the hydrolysis of ATP to the transfer of proteins into and across the cell membrane, serving both as a receptor for the preprotein-SecB complex and as an ATP-driven molecular motor driving the stepwise translocation of polypeptide chains across the membrane. The protein is Protein translocase subunit SecA of Agrobacterium fabrum (strain C58 / ATCC 33970) (Agrobacterium tumefaciens (strain C58)).